Reading from the N-terminus, the 947-residue chain is Mitogen-activated protein kinase kinase kinase 14 (947 aa).

2 disordered regions span residues Met-1 to Ser-37 and Lys-135 to Gln-171. Residues Lys-135–Ser-151 show a composition bias toward basic residues. The Protein kinase domain maps to Ala-400–Leu-655. The interaction with ZFP91 stretch occupies residues Thr-401–Arg-653. ATP-binding positions include Leu-406–Val-414 and Lys-429. Asp-515 acts as the Proton acceptor in catalysis. Thr-559 bears the Phosphothreonine mark. 2 disordered regions span residues Lys-662–Pro-766 and Leu-805–Ser-830. Positions Trp-665–His-674 are enriched in basic and acidic residues. Over residues Leu-713–Ser-727 the composition is skewed to pro residues. Over residues Glu-741–Pro-752 the composition is skewed to low complexity. Positions Ser-814–His-829 are enriched in polar residues.

It belongs to the protein kinase superfamily. STE Ser/Thr protein kinase family. MAP kinase kinase kinase subfamily. Interacts with TRAF2, TRAF5, TRAF6, IKKA and NFKB2/P100. Interacts with TRAF3 and PELI3. Interacts with NIBP; the interaction is direct. Interacts with ARRB1 and ARRB2. Interacts with GRB10. Interacts with ZFP91. Interacts with NLRP12; this interaction promotes proteasomal degradation of MAP3K14. Directly interacts with DDX3X. Interacts (via C-terminus and kinase domain) with PPPC3A (via N-terminus) and PPP3CB. Autophosphorylated. Phosphorylation at Thr-559 is required to activate its kinase activity and 'Lys-63'-linked polyubiquitination. Phosphorylated by CHUK/IKKA leading to MAP3K14 destabilization. Post-translationally, ubiquitinated. Undergoes both 'Lys-48'- and 'Lys-63'-linked polyubiquitination. 'Lys-48'-linked polyubiquitination leads to its degradation by the proteasome, while 'Lys-63'-linked polyubiquitination stabilizes and activates it. As to expression, weakly expressed in testis, small intestine, spleen, thymus, peripheral blood leukocytes, prostate, ovary and colon.

It localises to the cytoplasm. The enzyme catalyses L-seryl-[protein] + ATP = O-phospho-L-seryl-[protein] + ADP + H(+). It carries out the reaction L-threonyl-[protein] + ATP = O-phospho-L-threonyl-[protein] + ADP + H(+). In terms of biological role, lymphotoxin beta-activated kinase which seems to be exclusively involved in the activation of NF-kappa-B and its transcriptional activity. Phosphorylates CHUK/IKKA, thereby promoting proteolytic processing of NFKB2/P100, which leads to NF-kappa-B activation via the non-canonical pathway. Has an essential role in the non-canonical NF-kappa-B signaling that regulates genes encoding molecules involved in B-cell survival, lymphoid organogenesis, and immune response. Could act in a receptor-selective manner. The protein is Mitogen-activated protein kinase kinase kinase 14 of Homo sapiens (Human).